The sequence spans 123 residues: uncharacterized protein (123 aa).

Residues 5–25 form a helical membrane-spanning segment; the sequence is GTLVIIFAIVLILCIMLLFFY. The tract at residues 32-53 is disordered; the sequence is KSGVLPPPIPPPTPPPPKKKYD. The span at 36–47 shows a compositional bias: pro residues; the sequence is LPPPIPPPTPPP.

It belongs to the asfivirus CP123L family.

The protein localises to the host membrane. Its subcellular location is the virion. This is an uncharacterized protein from Ornithodoros (relapsing fever ticks).